A 359-amino-acid polypeptide reads, in one-letter code: tRNA N6-adenosine threonylcarbamoyltransferase (359 aa).

Positions 115 and 119 each coordinate Fe cation. Substrate-binding positions include 137-141, Asp-170, Gly-183, and Asn-283; that span reads LVSGG. Asp-311 contacts Fe cation. A disordered region spans residues 328-359; that stretch reads APDSLDIAPRSRWPLDEKSAPVFGTGRRGAKA.

The protein belongs to the KAE1 / TsaD family. It depends on Fe(2+) as a cofactor.

Its subcellular location is the cytoplasm. It carries out the reaction L-threonylcarbamoyladenylate + adenosine(37) in tRNA = N(6)-L-threonylcarbamoyladenosine(37) in tRNA + AMP + H(+). Functionally, required for the formation of a threonylcarbamoyl group on adenosine at position 37 (t(6)A37) in tRNAs that read codons beginning with adenine. Is involved in the transfer of the threonylcarbamoyl moiety of threonylcarbamoyl-AMP (TC-AMP) to the N6 group of A37, together with TsaE and TsaB. TsaD likely plays a direct catalytic role in this reaction. This is tRNA N6-adenosine threonylcarbamoyltransferase from Brucella melitensis biotype 2 (strain ATCC 23457).